The primary structure comprises 307 residues: Glutaminase (307 aa).

Residues serine 66, asparagine 116, glutamate 160, asparagine 167, tyrosine 191, tyrosine 243, and valine 261 each coordinate substrate.

It belongs to the glutaminase family. As to quaternary structure, homotetramer.

The catalysed reaction is L-glutamine + H2O = L-glutamate + NH4(+). The sequence is that of Glutaminase from Pseudoalteromonas translucida (strain TAC 125).